The sequence spans 80 residues: Defensin-like protein 18 (80 aa).

The signal sequence occupies residues 1-29 (MAKFCTTITLILVALVLFADFEAPTIVKA). Intrachain disulfides connect Cys-32/Cys-80, Cys-43/Cys-64, Cys-49/Cys-74, and Cys-53/Cys-76.

This sequence belongs to the DEFL family.

It localises to the secreted. In terms of biological role, confers broad-spectrum resistance to pathogens. In Arabidopsis thaliana (Mouse-ear cress), this protein is Defensin-like protein 18 (PDF1.5).